The following is a 1887-amino-acid chain: Protein TIC 214 (1887 aa).

The next 6 helical transmembrane spans lie at 18–38 (IINSVVVVGLYYGFLTTFSIG), 64–84 (FITGQLMMFISIYYAPLHLAL), 87–107 (PHTITVLALPYLLFHFFWNNH), 124–144 (LSIQCVFLNNLIFQLFNHFIL), 172–192 (VGWLIGHILFMKWLGLVLVWI), and 221–241 (IFSILLFITCVYYLGRIPSPI). 3 disordered regions span residues 248–300 (EASK…EGWD), 785–805 (REEQTKREEKKEKDKKEDNKR), and 1569–1603 (LPSNKKIKNRSQETKEPPSQRERGSDIENKGNLSP). Residues 256 to 268 (VESEEERDVEIET) are compositionally biased toward acidic residues. Basic and acidic residues predominate over residues 1578–1597 (RSQETKEPPSQRERGSDIEN).

It belongs to the TIC214 family. In terms of assembly, part of the Tic complex.

Its subcellular location is the plastid. It is found in the chloroplast inner membrane. Functionally, involved in protein precursor import into chloroplasts. May be part of an intermediate translocation complex acting as a protein-conducting channel at the inner envelope. This Solanum tuberosum (Potato) protein is Protein TIC 214.